The following is a 369-amino-acid chain: Transmembrane protein adipocyte-associated 1 (369 aa).

The N-linked (GlcNAc...) asparagine glycan is linked to Asn20. 7 helical membrane passes run 45-65 (LLLL…LPLA), 73-93 (SSPI…VGIA), 120-140 (FFLL…GHLE), 148-168 (VLAI…TLEI), 189-209 (QFWL…VILP), 237-257 (LLQG…LCCV), and 262-282 (FLYF…GFFG). The N-linked (GlcNAc...) asparagine glycan is linked to Asn329.

It belongs to the UPF0359 family. Ubiquitous, with higher levels in heart, brain, lung, liver and kidney.

The protein resides in the membrane. This Mus musculus (Mouse) protein is Transmembrane protein adipocyte-associated 1 (Tpra1).